Consider the following 221-residue polypeptide: Lipoprotein-releasing system ATP-binding protein LolD (221 aa).

In terms of domain architecture, ABC transporter spans 6–220 (LTLKNVSKHY…YKLKHGALNM (215 aa)). 42–49 (GSSGSGKS) contacts ATP.

This sequence belongs to the ABC transporter superfamily. Lipoprotein translocase (TC 3.A.1.125) family. The complex is composed of two ATP-binding proteins (LolD) and two transmembrane proteins (LolC and LolE).

The protein resides in the cell inner membrane. Part of the ABC transporter complex LolCDE involved in the translocation of mature outer membrane-directed lipoproteins, from the inner membrane to the periplasmic chaperone, LolA. Responsible for the formation of the LolA-lipoprotein complex in an ATP-dependent manner. In Rickettsia bellii (strain RML369-C), this protein is Lipoprotein-releasing system ATP-binding protein LolD.